Consider the following 493-residue polypeptide: Probable cytochrome P450 CYP36A1 (493 aa).

A run of 3 helical transmembrane segments spans residues 1 to 21 (MLFAQLVILVIIVMLFLCRFA), 60 to 80 (GGIFTLWLPFPTIVICDYDML), and 290 to 310 (QLIVAIYDLYSAGMETIIIVL). Cys440 is a binding site for heme.

It belongs to the cytochrome P450 family. Requires heme as cofactor.

It localises to the membrane. Its function is as follows. Cytochromes P450 are a group of heme-thiolate monooxygenases. They oxidize a variety of structurally unrelated compounds, including steroids, fatty acids, and xenobiotics. The protein is Probable cytochrome P450 CYP36A1 (cyp-36A1) of Caenorhabditis elegans.